Consider the following 363-residue polypeptide: Peptide chain release factor 2 (363 aa).

The residue at position 251 (Gln-251) is an N5-methylglutamine.

It belongs to the prokaryotic/mitochondrial release factor family. Post-translationally, methylated by PrmC. Methylation increases the termination efficiency of RF2.

Its subcellular location is the cytoplasm. Its function is as follows. Peptide chain release factor 2 directs the termination of translation in response to the peptide chain termination codons UGA and UAA. This chain is Peptide chain release factor 2, found in Helicobacter pylori (strain HPAG1).